Reading from the N-terminus, the 158-residue chain is Cyclic pyranopterin monophosphate synthase (158 aa).

Substrate-binding positions include 74-76 and 112-113; these read MCH and ME. Asp127 is an active-site residue.

This sequence belongs to the MoaC family. Homohexamer; trimer of dimers.

The enzyme catalyses (8S)-3',8-cyclo-7,8-dihydroguanosine 5'-triphosphate = cyclic pyranopterin phosphate + diphosphate. It functions in the pathway cofactor biosynthesis; molybdopterin biosynthesis. In terms of biological role, catalyzes the conversion of (8S)-3',8-cyclo-7,8-dihydroguanosine 5'-triphosphate to cyclic pyranopterin monophosphate (cPMP). In Helicobacter pylori (strain HPAG1), this protein is Cyclic pyranopterin monophosphate synthase.